Consider the following 151-residue polypeptide: Transcriptional regulator MraZ (151 aa).

2 SpoVT-AbrB domains span residues 5–52 (ANAI…PLSE) and 81–124 (AVDL…DEDA).

It belongs to the MraZ family. As to quaternary structure, forms oligomers.

It localises to the cytoplasm. It is found in the nucleoid. This is Transcriptional regulator MraZ from Pseudomonas syringae pv. tomato (strain ATCC BAA-871 / DC3000).